Consider the following 206-residue polypeptide: RNA-binding protein (206 aa).

The disordered stretch occupies residues Pro87–Arg206. A compositionally biased stretch (basic and acidic residues) spans Met109–Ser132.

The protein belongs to the phytoreovirus RNA-binding protein family.

It is found in the host cytoplasm. Constituent of viral factories. Binds to ssRNA and dsRNA. This Rice gall dwarf virus (RGDV) protein is RNA-binding protein.